The sequence spans 492 residues: RNase aCSPSF2 (492 aa).

A divalent metal cation-binding residues include histidine 130, histidine 132, aspartate 134, histidine 135, histidine 213, aspartate 234, and histidine 460.

This sequence belongs to the metallo-beta-lactamase superfamily. RNA-metabolizing metallo-beta-lactamase-like family. Mg(2+) is required as a cofactor.

A 5'-3' exoribonuclease, more active on 5'-monophosphorylated and 5'-hydroxylated RNA than 5'-tri-phosphorylated RNA; note there is no evidence for accumulation of 5'-monophosphorylated RNA in this organism. Translation initiation factor 2 subunit gamma but not subunit alpha protects 5'-tri-phosphorylated RNA from degradation by this enzyme. The polypeptide is RNase aCSPSF2 (Saccharolobus solfataricus (strain ATCC 35092 / DSM 1617 / JCM 11322 / P2) (Sulfolobus solfataricus)).